A 339-amino-acid chain; its full sequence is tRNA N6-adenosine threonylcarbamoyltransferase (339 aa).

Fe cation contacts are provided by H111 and H115. Substrate is bound by residues 134 to 138, D167, G180, and N274; that span reads LVSGG. D302 is a Fe cation binding site.

This sequence belongs to the KAE1 / TsaD family. Fe(2+) is required as a cofactor.

It localises to the cytoplasm. The enzyme catalyses L-threonylcarbamoyladenylate + adenosine(37) in tRNA = N(6)-L-threonylcarbamoyladenosine(37) in tRNA + AMP + H(+). Functionally, required for the formation of a threonylcarbamoyl group on adenosine at position 37 (t(6)A37) in tRNAs that read codons beginning with adenine. Is involved in the transfer of the threonylcarbamoyl moiety of threonylcarbamoyl-AMP (TC-AMP) to the N6 group of A37, together with TsaE and TsaB. TsaD likely plays a direct catalytic role in this reaction. The polypeptide is tRNA N6-adenosine threonylcarbamoyltransferase (Methylobacillus flagellatus (strain ATCC 51484 / DSM 6875 / VKM B-1610 / KT)).